The chain runs to 408 residues: Neutral cholesterol ester hydrolase 1 (408 aa).

Residues 1-4 lie on the Cytoplasmic side of the membrane; that stretch reads MRSS. The chain crosses the membrane as a helical; Signal-anchor for type II membrane protein span at residues 5–25; the sequence is CVLLAALLALVAYYVYIPLPS. Topologically, residues 26-408 are lumenal; that stretch reads AVSDPWKLML…SYFKWLDQNL (383 aa). Positions 113 to 115 match the Involved in the stabilization of the negatively charged intermediate by the formation of the oxyanion hole motif; sequence HGG. Ser-191 is an active-site residue. N-linked (GlcNAc...) asparagine glycosylation is present at Asn-270. The active site involves Asp-348. N-linked (GlcNAc...) asparagine glycosylation occurs at Asn-367. His-378 is a catalytic residue. Asn-389 carries N-linked (GlcNAc...) asparagine glycosylation.

Belongs to the 'GDXG' lipolytic enzyme family. Post-translationally, N-glycosylated.

The protein localises to the cell membrane. It localises to the microsome. It catalyses the reaction a 1-O-alkyl-2-acetyl-sn-glycerol + H2O = a 1-O-alkyl-sn-glycerol + acetate + H(+). It carries out the reaction 1-O-hexadecyl-2-acetyl-sn-glycerol + H2O = 1-O-hexadecyl-sn-glycerol + acetate + H(+). The enzyme catalyses a cholesterol ester + H2O = cholesterol + a fatty acid + H(+). The catalysed reaction is cholesteryl (9Z-octadecenoate) + H2O = cholesterol + (9Z)-octadecenoate + H(+). Hydrolyzes 2-acetyl monoalkylglycerol ether (1-O-alkyl-2-acetyl-sn-glycerol), the penultimate precursor of the pathway for de novo synthesis of platelet-activating factor. May be responsible for the hydrolysis of cholesterol esters (such as cholesteryl (9Z-octadecenoate)) in macrophages. Also involved in organ detoxification by hydrolyzing exogenous organophosphorus compounds. This chain is Neutral cholesterol ester hydrolase 1 (Nceh1), found in Rattus norvegicus (Rat).